We begin with the raw amino-acid sequence, 353 residues long: Photosystem II protein D1 (353 aa).

N-acetylthreonine is present on Thr2. Position 2 is a phosphothreonine (Thr2). The next 3 helical transmembrane spans lie at 29–46 (YIGWFGVLMIPTLLTATS), 118–133 (HFLLGVACYMGREWEL), and 142–156 (WIAVAYSAPVAAAAA). His118 is a binding site for chlorophyll a. Tyr126 provides a ligand contact to pheophytin a. 2 residues coordinate [CaMn4O5] cluster: Asp170 and Glu189. The chain crosses the membrane as a helical span at residues 197 to 218 (FHMLGVAGVFGGSLFSAMHGSL). His198 lines the chlorophyll a pocket. Residues His215 and 264–265 (SF) contribute to the a quinone site. His215 contacts Fe cation. Fe cation is bound at residue His272. A helical membrane pass occupies residues 274–288 (FLAAWPVVGIWFTAL). His332, Glu333, Asp342, and Ala344 together coordinate [CaMn4O5] cluster. Positions 345-353 (AVEAPSTNG) are excised as a propeptide.

The protein belongs to the reaction center PufL/M/PsbA/D family. In terms of assembly, PSII is composed of 1 copy each of membrane proteins PsbA, PsbB, PsbC, PsbD, PsbE, PsbF, PsbH, PsbI, PsbJ, PsbK, PsbL, PsbM, PsbT, PsbX, PsbY, PsbZ, Psb30/Ycf12, at least 3 peripheral proteins of the oxygen-evolving complex and a large number of cofactors. It forms dimeric complexes. Requires The D1/D2 heterodimer binds P680, chlorophylls that are the primary electron donor of PSII, and subsequent electron acceptors. It shares a non-heme iron and each subunit binds pheophytin, quinone, additional chlorophylls, carotenoids and lipids. D1 provides most of the ligands for the Mn4-Ca-O5 cluster of the oxygen-evolving complex (OEC). There is also a Cl(-1) ion associated with D1 and D2, which is required for oxygen evolution. The PSII complex binds additional chlorophylls, carotenoids and specific lipids. as cofactor. Post-translationally, tyr-161 forms a radical intermediate that is referred to as redox-active TyrZ, YZ or Y-Z. In terms of processing, C-terminally processed by CTPA; processing is essential to allow assembly of the oxygen-evolving complex and thus photosynthetic growth.

The protein resides in the plastid. It localises to the chloroplast thylakoid membrane. It carries out the reaction 2 a plastoquinone + 4 hnu + 2 H2O = 2 a plastoquinol + O2. In terms of biological role, photosystem II (PSII) is a light-driven water:plastoquinone oxidoreductase that uses light energy to abstract electrons from H(2)O, generating O(2) and a proton gradient subsequently used for ATP formation. It consists of a core antenna complex that captures photons, and an electron transfer chain that converts photonic excitation into a charge separation. The D1/D2 (PsbA/PsbD) reaction center heterodimer binds P680, the primary electron donor of PSII as well as several subsequent electron acceptors. The protein is Photosystem II protein D1 of Nandina domestica (Heavenly bamboo).